We begin with the raw amino-acid sequence, 252 residues long: Triosephosphate isomerase (252 aa).

Substrate is bound at residue 9–11; it reads NWK. H95 functions as the Electrophile in the catalytic mechanism. The active-site Proton acceptor is the E167. Residues G173, S213, and 234 to 235 contribute to the substrate site; that span reads GG.

The protein belongs to the triosephosphate isomerase family. In terms of assembly, homodimer.

It localises to the cytoplasm. The catalysed reaction is D-glyceraldehyde 3-phosphate = dihydroxyacetone phosphate. It functions in the pathway carbohydrate biosynthesis; gluconeogenesis. It participates in carbohydrate degradation; glycolysis; D-glyceraldehyde 3-phosphate from glycerone phosphate: step 1/1. In terms of biological role, involved in the gluconeogenesis. Catalyzes stereospecifically the conversion of dihydroxyacetone phosphate (DHAP) to D-glyceraldehyde-3-phosphate (G3P). This chain is Triosephosphate isomerase, found in Lactiplantibacillus plantarum (strain ATCC BAA-793 / NCIMB 8826 / WCFS1) (Lactobacillus plantarum).